Reading from the N-terminus, the 172-residue chain is Translocon-associated protein subunit delta (172 aa).

A signal peptide spans 1–24; sequence MAALASLGALALLLLSGLSCCSEA. Residues C25 and C56 are joined by a disulfide bond. Residues 25–143 are Lumenal-facing; the sequence is CVEPQITPSY…SVDHRGTWNG (119 aa). K72 is covalently cross-linked (Glycyl lysine isopeptide (Lys-Gly) (interchain with G-Cter in ubiquitin)). A helical transmembrane segment spans residues 144–164; the sequence is PWVSTEVLAAAIGLVIYYLAF. Topologically, residues 165–172 are cytoplasmic; it reads SAKSHIQA.

Belongs to the TRAP-delta family. As to quaternary structure, heterotetramer of TRAP-alpha, TRAP-beta, TRAP-delta and TRAP-gamma.

The protein resides in the endoplasmic reticulum membrane. Functionally, TRAP proteins are part of a complex whose function is to bind calcium to the ER membrane and thereby regulate the retention of ER resident proteins. The protein is Translocon-associated protein subunit delta (SSR4) of Bos taurus (Bovine).